Here is a 239-residue protein sequence, read N- to C-terminus: Adapter protein MecA (239 aa).

The span at 118–128 (EQRTKEKEAQG) shows a compositional bias: basic and acidic residues. Residues 118 to 137 (EQRTKEKEAQGSKRQKSSAR) are disordered.

This sequence belongs to the MecA family. As to quaternary structure, homodimer.

Its function is as follows. Enables the recognition and targeting of unfolded and aggregated proteins to the ClpC protease or to other proteins involved in proteolysis. The polypeptide is Adapter protein MecA (Staphylococcus aureus (strain USA300)).